The chain runs to 442 residues: Magnesium transporter MRS2-1 (442 aa).

A disordered region spans residues 1-30 (MSELKERLLPPRPASAMNLRDASVTRPSAS). Transmembrane regions (helical) follow at residues 378–398 (LLLTTATFVVAIFGVVAGIFG) and 414–434 (WVLIITGVCGFVIFSAFVWFF). Positions 398–400 (GMN) match the Required for magnesium transport activity motif.

The protein belongs to the CorA metal ion transporter (MIT) (TC 1.A.35.5) family. As to expression, expressed in the whole plant except stems.

Its subcellular location is the membrane. In terms of biological role, magnesium transporter that may mediate the influx of magnesium. The protein is Magnesium transporter MRS2-1 (MRS2-1) of Arabidopsis thaliana (Mouse-ear cress).